Reading from the N-terminus, the 65-residue chain is Probable tautomerase RSp1151 (65 aa).

Residue Pro2 is the Proton acceptor; via imino nitrogen of the active site.

This sequence belongs to the 4-oxalocrotonate tautomerase family.

The protein is Probable tautomerase RSp1151 of Ralstonia nicotianae (strain ATCC BAA-1114 / GMI1000) (Ralstonia solanacearum).